The chain runs to 338 residues: Methionine import ATP-binding protein MetN 2 (338 aa).

In terms of domain architecture, ABC transporter spans 2-242 (IQLEGVSVDF…PQHAFTRQLV (241 aa)). An ATP-binding site is contributed by 39–46 (GTSGAGKS).

Belongs to the ABC transporter superfamily. Methionine importer (TC 3.A.1.24) family. The complex is composed of two ATP-binding proteins (MetN), two transmembrane proteins (MetI) and a solute-binding protein (MetQ).

The protein localises to the cell inner membrane. The catalysed reaction is L-methionine(out) + ATP + H2O = L-methionine(in) + ADP + phosphate + H(+). It catalyses the reaction D-methionine(out) + ATP + H2O = D-methionine(in) + ADP + phosphate + H(+). Part of the ABC transporter complex MetNIQ involved in methionine import. Responsible for energy coupling to the transport system. This Pectobacterium atrosepticum (strain SCRI 1043 / ATCC BAA-672) (Erwinia carotovora subsp. atroseptica) protein is Methionine import ATP-binding protein MetN 2.